The sequence spans 103 residues: uncharacterized protein (103 aa).

Over residues Met-1 to Asn-10 the composition is skewed to basic residues. 2 disordered regions span residues Met-1–Lys-38 and Ala-77–Lys-103.

This is an uncharacterized protein from Schizosaccharomyces pombe (strain 972 / ATCC 24843) (Fission yeast).